The following is a 539-amino-acid chain: CTP synthase (539 aa).

The interval 1 to 272 (MTLRSKMTKY…AQIILSHFKI (272 aa)) is amidoligase domain. A CTP-binding site is contributed by S19. S19 lines the UTP pocket. 20–25 (GLGKGV) serves as a coordination point for ATP. Residue Y60 coordinates L-glutamine. D77 provides a ligand contact to ATP. D77 and E147 together coordinate Mg(2+). CTP is bound by residues 154–156 (DIE), 193–198 (KSKPTQ), and K229. UTP is bound by residues 193 to 198 (KSKPTQ) and K229. In terms of domain architecture, Glutamine amidotransferase type-1 spans 298-539 (KILMVGKYVE…SFLRVLIKNN (242 aa)). G360 contacts L-glutamine. Catalysis depends on C387, which acts as the Nucleophile; for glutamine hydrolysis. L-glutamine-binding positions include 388-391 (LGFQ), E410, and R469. Residues H514 and E516 contribute to the active site.

The protein belongs to the CTP synthase family. In terms of assembly, homotetramer.

The enzyme catalyses UTP + L-glutamine + ATP + H2O = CTP + L-glutamate + ADP + phosphate + 2 H(+). It carries out the reaction L-glutamine + H2O = L-glutamate + NH4(+). It catalyses the reaction UTP + NH4(+) + ATP = CTP + ADP + phosphate + 2 H(+). It functions in the pathway pyrimidine metabolism; CTP biosynthesis via de novo pathway; CTP from UDP: step 2/2. Allosterically activated by GTP, when glutamine is the substrate; GTP has no effect on the reaction when ammonia is the substrate. The allosteric effector GTP functions by stabilizing the protein conformation that binds the tetrahedral intermediate(s) formed during glutamine hydrolysis. Inhibited by the product CTP, via allosteric rather than competitive inhibition. Its function is as follows. Catalyzes the ATP-dependent amination of UTP to CTP with either L-glutamine or ammonia as the source of nitrogen. Regulates intracellular CTP levels through interactions with the four ribonucleotide triphosphates. The protein is CTP synthase of Mycoplasmopsis pulmonis (strain UAB CTIP) (Mycoplasma pulmonis).